We begin with the raw amino-acid sequence, 172 residues long: SsrA-binding protein (172 aa).

The protein belongs to the SmpB family.

It localises to the cytoplasm. Functionally, required for rescue of stalled ribosomes mediated by trans-translation. Binds to transfer-messenger RNA (tmRNA), required for stable association of tmRNA with ribosomes. tmRNA and SmpB together mimic tRNA shape, replacing the anticodon stem-loop with SmpB. tmRNA is encoded by the ssrA gene; the 2 termini fold to resemble tRNA(Ala) and it encodes a 'tag peptide', a short internal open reading frame. During trans-translation Ala-aminoacylated tmRNA acts like a tRNA, entering the A-site of stalled ribosomes, displacing the stalled mRNA. The ribosome then switches to translate the ORF on the tmRNA; the nascent peptide is terminated with the 'tag peptide' encoded by the tmRNA and targeted for degradation. The ribosome is freed to recommence translation, which seems to be the essential function of trans-translation. This Dehalococcoides mccartyi (strain CBDB1) protein is SsrA-binding protein.